A 335-amino-acid polypeptide reads, in one-letter code: Protein BRASSINAZOLE-RESISTANT 2 (335 aa).

Positions 1–19 are enriched in low complexity; the sequence is MTSDGATSTSAAAAAAAMA. Disordered stretches follow at residues 1–40, 85–122, and 164–190; these read MTSD…RRRR, TYRK…FDSP, and PPLR…KPLP. The segment at 22-103 is required for DNA-binding; the sequence is RKPSWREREN…PGDMAGSSSR (82 aa). Residues 99 to 120 are compositionally biased toward polar residues; the sequence is GSSSRATPYSSHNQSPLSSTFD. At threonine 175 the chain carries Phosphothreonine. The PEST-like stretch occupies residues 231 to 251; it reads HAPATIPECDESDSSTVDSGH.

The protein belongs to the BZR/LAT61 family. As to quaternary structure, interacts with ASK7/BIN2 through its C-terminal domain and with the bHLH transcription factors BIM1, BIM2 and BIM3 through its C- and N-terminal domains. Interacts (via N-terminus) with REF6 and ELF6. Interacts with MYB30. Interacts with IWS1. Interacts with ASHH2/SDG8. Binds to MYB56 when dephosphorylated in the nucleus of quiescent center (QC) cells. Binds to WRKY46, WRKY54 and WRKY70 to cooperatively regulate the expression of target genes. Post-translationally, phosphorylated by ASK7/BIN2. Phosphorylation increases protein degradation and/or interferes with the nuclear localization. Ubiquitously expressed in cotyledons, leaves, hypocotyls and roots.

Its subcellular location is the nucleus. It localises to the cytoplasm. Positive regulator of brassinosteroid (BR) signaling. Transcription factor that activates target gene expression by binding specifically to the DNA sequence 5'-CANNTG-3'(E box) through its N-terminal domain. Can bind individually to the promoter as a homodimer or synergistically as a heterodimer with BIM1, BIM2 or BIM3. The C-terminal domain is probably involved in transcriptional activation. Recruits the transcription elongation factor IWS1 to control BR-regulated gene expression. Forms a trimeric complex with IWS1 and ASHH2/SDG8 to regulate BR-regulated gene expression. Promotes quiescent center (QC) self-renewal by cell divisions in the primary root. Binds to the E-boxes of the BRAVO promoter to repress its expression. The sequence is that of Protein BRASSINAZOLE-RESISTANT 2 from Arabidopsis thaliana (Mouse-ear cress).